The following is a 2157-amino-acid chain: Polyketide synthase 2 (2157 aa).

The tract at residues 7–244 is N-terminal acylcarrier protein transacylase domain (SAT); that stretch reads FIFGDQTGGF…IPIPIWAPYH (238 aa). Residues 374–807 form the Ketosynthase family 3 (KS3) domain; that stretch reads DSKIAIIGMS…GGNSALLLED (434 aa). Residues Cys-546, His-681, and His-723 each act as for beta-ketoacyl synthase activity in the active site. The interval 908–1213 is malonyl-CoA:ACP transacylase (MAT) domain; it reads GFVFSGQGAQ…ASLHRKDDGW (306 aa). Catalysis depends on Ser-998, which acts as the For acyl/malonyl transferase activity. A product template (PT) domain region spans residues 1290 to 1605; sequence TSSVQKIIRQ…RSLLNKVLPP (316 aa). Residues 1294–1428 are N-terminal hotdog fold; that stretch reads QKIIRQTDGP…CLLRFADPTS (135 aa). Residues 1294–1600 form the PKS/mFAS DH domain; sequence QKIIRQTDGP…FLGMSRSLLN (307 aa). The Proton acceptor; for dehydratase activity role is filled by His-1327. The C-terminal hotdog fold stretch occupies residues 1455–1600; the sequence is TDSLLSRGIV…FLGMSRSLLN (146 aa). The active-site Proton donor; for dehydratase activity is Asp-1514. The disordered stretch occupies residues 1626–1652; that stretch reads AASAKDTERRPLDIPTRAQRQPSSAQT. Over residues 1643-1652 the composition is skewed to polar residues; sequence AQRQPSSAQT. A Carrier 1 domain is found at 1649 to 1726; sequence SAQTGTMGRI…ELKAFLGADQ (78 aa). Ser-1686 carries the O-(pantetheine 4'-phosphoryl)serine modification. The segment at 1733–1762 is disordered; sequence ACESSNGQHTPQTSDKGSGTLAVQKTDDDT. Positions 1735–1755 are enriched in polar residues; the sequence is ESSNGQHTPQTSDKGSGTLAV. The Carrier 2 domain maps to 1765 to 1839; sequence DMTLNRVCAI…SLQKALCGSE (75 aa). Ser-1799 carries the post-translational modification O-(pantetheine 4'-phosphoryl)serine. A disordered region spans residues 1840–1859; it reads AASNGAPEANETTPSSHRLE. Residues 1875–2151 form a thioesterase (TE) domain region; the sequence is ASPPHATSIL…MIEMGNLIGE (277 aa). Catalysis depends on Ser-1981, which acts as the For thioesterase activity.

Polyketide synthase; part of the Pks2 gene cluster that mediates the formation of infectious structures (appressoria), enabling these fungi to kill insects faster. The product of the Pks2 gene cluster is different from the one of Pks1 and has still not been identified. The protein is Polyketide synthase 2 of Metarhizium robertsii (strain ARSEF 23 / ATCC MYA-3075) (Metarhizium anisopliae (strain ARSEF 23)).